A 390-amino-acid chain; its full sequence is Centrosomal protein of 44 kDa (390 aa).

The tract at residues 11 to 195 is binds with microtubules and centrioles; that stretch reads RNLEQVLRLL…ISEDTLSPIT (185 aa). Residues 233 to 267 are a coiled coil; that stretch reads EITALQTMLAECQEKLKELTLIEKRLDCLEQKMKG. Residues 323–347 are disordered; sequence KNKVGRPASIPLSSRYSTASSDSTP. A phosphoserine mark is found at Ser331 and Ser345. Residues 335–345 show a composition bias toward low complexity; the sequence is SSRYSTASSDS. At Thr346 the chain carries Phosphothreonine. Residues 361-385 are a coiled coil; sequence SEETTIQKMERMKKMFEETAELLKC.

As to quaternary structure, interacts with CROCC. Interacts with POC1B; the interaction is direct and recruits POC1B to centriolar microtubules. Binds to centriolar microtubules.

Its subcellular location is the cytoplasm. It localises to the cytoskeleton. The protein localises to the microtubule organizing center. The protein resides in the centrosome. It is found in the centriole. Its subcellular location is the spindle pole. It localises to the midbody. Its function is as follows. Centriole-enriched microtubule-binding protein involved in centriole biogenesis. In collaboration with CEP295 and POC1B, is required for the centriole-to-centrosome conversion by ensuring the formation of bona fide centriole wall. Functions as a linker component that maintains centrosome cohesion. Associates with CROCC and regulates its stability and localization to the centrosome. In Macaca fascicularis (Crab-eating macaque), this protein is Centrosomal protein of 44 kDa (CEP44).